The primary structure comprises 54 residues: Potassium channel toxin alpha-KTx 14.5 (54 aa).

Residues 1-23 form the signal peptide; the sequence is MKIFFAILLILAVCSMAIWTVNG. Disulfide bonds link cysteine 30–cysteine 46, cysteine 36–cysteine 51, and cysteine 40–cysteine 53.

This sequence belongs to the short scorpion toxin superfamily. Potassium channel inhibitor family. Alpha-KTx 14 subfamily. In terms of tissue distribution, expressed by the venom gland.

The protein resides in the secreted. Functionally, inhibits potassium channels. May be active towards small conductance calcium-activated potassium channels (KCNN, SK), and less active towards voltage-gated potassium channels (Kv/KCN). This Mesobuthus gibbosus (Mediterranean checkered scorpion) protein is Potassium channel toxin alpha-KTx 14.5.